A 79-amino-acid polypeptide reads, in one-letter code: Defensin-like protein 272 (79 aa).

Positions 1 to 24 (MSSKIKFVALLIVVISLLLNNAQS) are cleaved as a signal peptide. 4 cysteine pairs are disulfide-bonded: Cys34–Cys77, Cys43–Cys63, Cys49–Cys75, and Cys53–Cys76.

It belongs to the DEFL family.

The protein resides in the secreted. The chain is Defensin-like protein 272 from Arabidopsis thaliana (Mouse-ear cress).